Reading from the N-terminus, the 213-residue chain is Protein-L-isoaspartate O-methyltransferase 1 (213 aa).

S64 is a catalytic residue.

The protein belongs to the methyltransferase superfamily. L-isoaspartyl/D-aspartyl protein methyltransferase family.

It localises to the cytoplasm. It carries out the reaction [protein]-L-isoaspartate + S-adenosyl-L-methionine = [protein]-L-isoaspartate alpha-methyl ester + S-adenosyl-L-homocysteine. In terms of biological role, catalyzes the methyl esterification of L-isoaspartyl residues in peptides and proteins that result from spontaneous decomposition of normal L-aspartyl and L-asparaginyl residues. It plays a role in the repair and/or degradation of damaged proteins. The polypeptide is Protein-L-isoaspartate O-methyltransferase 1 (Nitrosococcus oceani (strain ATCC 19707 / BCRC 17464 / JCM 30415 / NCIMB 11848 / C-107)).